We begin with the raw amino-acid sequence, 169 residues long: Peptide methionine sulfoxide reductase MsrA (169 aa).

Cys-10 is an active-site residue.

It belongs to the MsrA Met sulfoxide reductase family.

It catalyses the reaction L-methionyl-[protein] + [thioredoxin]-disulfide + H2O = L-methionyl-(S)-S-oxide-[protein] + [thioredoxin]-dithiol. It carries out the reaction [thioredoxin]-disulfide + L-methionine + H2O = L-methionine (S)-S-oxide + [thioredoxin]-dithiol. Functionally, has an important function as a repair enzyme for proteins that have been inactivated by oxidation. Catalyzes the reversible oxidation-reduction of methionine sulfoxide in proteins to methionine. The chain is Peptide methionine sulfoxide reductase MsrA from Streptococcus pyogenes serotype M1.